The primary structure comprises 308 residues: High-affinity branched-chain amino acid transport system permease protein LivH (308 aa).

Over 1 to 21 (MSEQFLYFLQQMFNGVTLGST) the chain is Cytoplasmic. The helical transmembrane segment at 22 to 42 (YALIAIGYTMVYGIIGMINFA) threads the bilayer. At 43–45 (HGE) the chain is on the periplasmic side. The helical transmembrane segment at 46–66 (VYMIGSYVSFMIIAALMMMGI) threads the bilayer. Topologically, residues 67–68 (DT) are cytoplasmic. Residues 69–89 (GWLLVAAGFVGAIVIASAYGW) form a helical membrane-spanning segment. Over 90–104 (SIERVAYRPVRNSKR) the chain is Periplasmic. A helical transmembrane segment spans residues 105–125 (LIALISAIGMSIFLQNYVSLT). The Cytoplasmic segment spans residues 126-154 (EGSRDVALPSLFNGQWVVGHSENFSASIT). Residues 155 to 175 (TMQAVIWIVTFLAMLALTIFI) traverse the membrane as a helical segment. The Periplasmic segment spans residues 176–203 (RYSRMGRACRACAEDLKMASLLGINTDR). The helical transmembrane segment at 204–224 (VIALTFVIGAAMAAVAGVLLG) threads the bilayer. The Cytoplasmic segment spans residues 225–245 (QFYGVINPYIGFMAGMKAFTA). Residues 246 to 266 (AVLGGIGSIPGAMIGGLILGI) traverse the membrane as a helical segment. At 267–280 (AEALSSAYLSTEYK) the chain is on the periplasmic side. The chain crosses the membrane as a helical span at residues 281 to 301 (DVVSFALLILVLLVMPTGILG). The Cytoplasmic segment spans residues 302–308 (RPEVEKV).

This sequence belongs to the binding-protein-dependent transport system permease family. LivHM subfamily.

Its subcellular location is the cell inner membrane. Its function is as follows. Part of the binding-protein-dependent transport system for branched-chain amino acids. Probably responsible for the translocation of the substrates across the membrane. This chain is High-affinity branched-chain amino acid transport system permease protein LivH (livH), found in Escherichia coli O157:H7.